A 345-amino-acid polypeptide reads, in one-letter code: Holliday junction branch migration complex subunit RuvB (345 aa).

Positions 4-185 (TDRLIAPSTQ…FGIVSRLEFY (182 aa)) are large ATPase domain (RuvB-L). ATP-binding positions include Leu-24, Arg-25, Gly-66, Lys-69, Thr-70, Thr-71, 132–134 (EDY), Arg-175, Tyr-185, and Arg-222. Thr-70 is a Mg(2+) binding site. A small ATPAse domain (RuvB-S) region spans residues 186–256 (TADELARIVH…IADAALKMLD (71 aa)). Residues 259–345 (KLGFDVMDRK…KIGTGELWQQ (87 aa)) are head domain (RuvB-H). DNA is bound by residues Arg-295, Arg-314, and Arg-319.

The protein belongs to the RuvB family. Homohexamer. Forms an RuvA(8)-RuvB(12)-Holliday junction (HJ) complex. HJ DNA is sandwiched between 2 RuvA tetramers; dsDNA enters through RuvA and exits via RuvB. An RuvB hexamer assembles on each DNA strand where it exits the tetramer. Each RuvB hexamer is contacted by two RuvA subunits (via domain III) on 2 adjacent RuvB subunits; this complex drives branch migration. In the full resolvosome a probable DNA-RuvA(4)-RuvB(12)-RuvC(2) complex forms which resolves the HJ.

The protein localises to the cytoplasm. It catalyses the reaction ATP + H2O = ADP + phosphate + H(+). Its function is as follows. The RuvA-RuvB-RuvC complex processes Holliday junction (HJ) DNA during genetic recombination and DNA repair, while the RuvA-RuvB complex plays an important role in the rescue of blocked DNA replication forks via replication fork reversal (RFR). RuvA specifically binds to HJ cruciform DNA, conferring on it an open structure. The RuvB hexamer acts as an ATP-dependent pump, pulling dsDNA into and through the RuvAB complex. RuvB forms 2 homohexamers on either side of HJ DNA bound by 1 or 2 RuvA tetramers; 4 subunits per hexamer contact DNA at a time. Coordinated motions by a converter formed by DNA-disengaged RuvB subunits stimulates ATP hydrolysis and nucleotide exchange. Immobilization of the converter enables RuvB to convert the ATP-contained energy into a lever motion, pulling 2 nucleotides of DNA out of the RuvA tetramer per ATP hydrolyzed, thus driving DNA branch migration. The RuvB motors rotate together with the DNA substrate, which together with the progressing nucleotide cycle form the mechanistic basis for DNA recombination by continuous HJ branch migration. Branch migration allows RuvC to scan DNA until it finds its consensus sequence, where it cleaves and resolves cruciform DNA. This chain is Holliday junction branch migration complex subunit RuvB, found in Methylobacillus flagellatus (strain ATCC 51484 / DSM 6875 / VKM B-1610 / KT).